The following is a 371-amino-acid chain: Ferrochelatase (371 aa).

The Fe cation site is built by histidine 218 and glutamate 299.

The protein belongs to the ferrochelatase family.

It localises to the cytoplasm. It catalyses the reaction heme b + 2 H(+) = protoporphyrin IX + Fe(2+). It participates in porphyrin-containing compound metabolism; protoheme biosynthesis; protoheme from protoporphyrin-IX: step 1/1. In terms of biological role, catalyzes the ferrous insertion into protoporphyrin IX. In Ralstonia nicotianae (strain ATCC BAA-1114 / GMI1000) (Ralstonia solanacearum), this protein is Ferrochelatase.